Consider the following 313-residue polypeptide: Ribosomal RNA small subunit methyltransferase H (313 aa).

S-adenosyl-L-methionine contacts are provided by residues glycine 35–histidine 37, aspartate 55, phenylalanine 79, aspartate 100, and glutamine 107.

It belongs to the methyltransferase superfamily. RsmH family.

It is found in the cytoplasm. It carries out the reaction cytidine(1402) in 16S rRNA + S-adenosyl-L-methionine = N(4)-methylcytidine(1402) in 16S rRNA + S-adenosyl-L-homocysteine + H(+). In terms of biological role, specifically methylates the N4 position of cytidine in position 1402 (C1402) of 16S rRNA. The sequence is that of Ribosomal RNA small subunit methyltransferase H from Burkholderia ambifaria (strain ATCC BAA-244 / DSM 16087 / CCUG 44356 / LMG 19182 / AMMD) (Burkholderia cepacia (strain AMMD)).